Here is a 385-residue protein sequence, read N- to C-terminus: FK506-binding protein 5 (385 aa).

One can recognise a PPIase FKBP-type domain in the interval Thr26–Trp115. TPR repeat units lie at residues Ala128–Leu161, Val177–Lys210, and Ile211–Leu244.

It catalyses the reaction [protein]-peptidylproline (omega=180) = [protein]-peptidylproline (omega=0). Inhibited by both FK506 and rapamycin. In terms of biological role, PPIases accelerate the folding of proteins. It catalyzes the cis-trans isomerization of proline imidic peptide bonds in oligopeptides. The sequence is that of FK506-binding protein 5 (FKBP5) from Rhizopus delemar (strain RA 99-880 / ATCC MYA-4621 / FGSC 9543 / NRRL 43880) (Mucormycosis agent).